The primary structure comprises 517 residues: MDIVGGQNLRQMWDDLAEVYGNKTALIFESSEGVVRQFSYASLNEEINRTANLFLASGIQKGDNVALHLDNCPEFFFCWFGLAKIGAIMVPINARLLREESAWILQNSRAQLIVTSAEFYPMYRQILLEDDTLLNHICLIGENAPVEDNVSHFSQLKDQQPATLCYAPPLSTDDTAEILFTSGTTSRPKGVVITHYNLRFAGYYSSWQCALREDDVYLTVMPAFHIDCQCTAAMAAFSAGSTFVLIEKYSARAFWGQVRKYRATVTECIPMMIRTLMVQPASPEERQHCLREVMFYLNLSVQEKDAFIARFGVRLLTSYGMTETIVGIIGDRPGDKRRWPSIGRPGFCYEADIRDEQNRSLPAGEIGEICIKGVPGKTIFKEYYARPEATAKALEANGWLHTGDSGYRDEEGFFYFVDRRCNMIKRGGENVSCIELENIISAHPKIQDIVVIGIHDSIRDEAIKAFVVLNEGETLTEEEFFAFCEQNMAKFKVPSFLEIRNDLPRNCSGKIIKKNLK.

Belongs to the ATP-dependent AMP-binding enzyme family.

It catalyses the reaction 4-(trimethylamino)butanoate + ATP + CoA = 4-(trimethylamino)butanoyl-CoA + AMP + diphosphate. It carries out the reaction crotonobetaine + ATP + CoA = crotonobetainyl-CoA + AMP + diphosphate. The catalysed reaction is (R)-carnitine + ATP + CoA = (R)-carnitinyl-CoA + AMP + diphosphate. It functions in the pathway amine and polyamine metabolism; carnitine metabolism. Its function is as follows. Catalyzes the transfer of CoA to carnitine, generating the initial carnitinyl-CoA needed for the CaiB reaction cycle. Also has activity toward crotonobetaine and gamma-butyrobetaine. The protein is Crotonobetaine/carnitine--CoA ligase of Citrobacter koseri (strain ATCC BAA-895 / CDC 4225-83 / SGSC4696).